The primary structure comprises 875 residues: Phosphoenolpyruvate carboxylase (875 aa).

Catalysis depends on residues H137 and K542.

The protein belongs to the PEPCase type 1 family. Mg(2+) serves as cofactor.

The enzyme catalyses oxaloacetate + phosphate = phosphoenolpyruvate + hydrogencarbonate. Functionally, forms oxaloacetate, a four-carbon dicarboxylic acid source for the tricarboxylic acid cycle. The chain is Phosphoenolpyruvate carboxylase from Pseudomonas putida (strain ATCC 700007 / DSM 6899 / JCM 31910 / BCRC 17059 / LMG 24140 / F1).